The following is a 158-amino-acid chain: MTHAFTHINADGNAHMVDVTDKSVTEREARAEAYIEMASETLEMIMSGSHHKGDVFATARIAGIQAAKKTSDLIPLCHPLMLTKVEVELEAQPEHNRVWIRSLCKLSGKTGVEMEALTAASTAALTIYDMCKAVQKDMVISQVRLTEKRGGKSGHFKV.

Substrate-binding positions include L76 to H78 and M114 to E115. The active site involves D129.

It belongs to the MoaC family. As to quaternary structure, homohexamer; trimer of dimers.

The enzyme catalyses (8S)-3',8-cyclo-7,8-dihydroguanosine 5'-triphosphate = cyclic pyranopterin phosphate + diphosphate. It functions in the pathway cofactor biosynthesis; molybdopterin biosynthesis. In terms of biological role, catalyzes the conversion of (8S)-3',8-cyclo-7,8-dihydroguanosine 5'-triphosphate to cyclic pyranopterin monophosphate (cPMP). In Shewanella halifaxensis (strain HAW-EB4), this protein is Cyclic pyranopterin monophosphate synthase.